A 333-amino-acid polypeptide reads, in one-letter code: Putative F-box protein At4g11580 (333 aa).

The 48-residue stretch at 11-58 folds into the F-box domain; that stretch reads VSEWADLNKDILELIFNKLDVMDITMGASRVCISWFLASHNKTLWNTV.

The sequence is that of Putative F-box protein At4g11580 from Arabidopsis thaliana (Mouse-ear cress).